Here is a 261-residue protein sequence, read N- to C-terminus: Mite allergen Eur m 3 (261 aa).

An N-terminal signal peptide occupies residues 1-18 (MVICNAIIVLLLAFNTLA). Residues 19-29 (NPILPSSPNAT) constitute a propeptide that is removed on maturation. The region spanning 30 to 260 (IVGGQKAKAG…FIDWIDSKRS (231 aa)) is the Peptidase S1 domain. An intrachain disulfide couples Cys-54 to Cys-70. Active-site charge relay system residues include His-69 and Asp-114. Disulfide bonds link Cys-181–Cys-198 and Cys-210–Cys-236. Catalysis depends on Ser-214, which acts as the Charge relay system.

The protein belongs to the peptidase S1 family.

The protein localises to the secreted. The protein is Mite allergen Eur m 3 (EURM3) of Euroglyphus maynei (Mayne's house dust mite).